The primary structure comprises 154 residues: Protein SprT-like (154 aa).

Residues 6–144 (LQQLTETISL…CGTCHGKLKF (139 aa)) enclose the SprT-like domain. Position 67 (His-67) interacts with Zn(2+). The active site involves Glu-68. His-71 lines the Zn(2+) pocket.

The protein belongs to the SprT family. Zn(2+) serves as cofactor.

The protein localises to the cytoplasm. This is Protein SprT-like from Shouchella clausii (strain KSM-K16) (Alkalihalobacillus clausii).